A 114-amino-acid polypeptide reads, in one-letter code: T cell receptor beta variable 5-1 (114 aa).

An N-terminal signal peptide occupies residues 1 to 21; the sequence is MGSRLLCWVLLCLLGAGPVKA. Residues 22–114 enclose the Ig-like domain; sequence GVTQTPRYLI…SALYLCASSL (93 aa). A disulfide bridge links Cys42 with Cys110. A glycan (N-linked (GlcNAc...) asparagine) is linked at Asn96.

As to quaternary structure, alpha-beta TR is a heterodimer composed of an alpha and beta chain; disulfide-linked. The alpha-beta TR is associated with the transmembrane signaling CD3 coreceptor proteins to form the TR-CD3 (TcR or TCR). The assembly of alpha-beta TR heterodimers with CD3 occurs in the endoplasmic reticulum where a single alpha-beta TR heterodimer associates with one CD3D-CD3E heterodimer, one CD3G-CD3E heterodimer and one CD247 homodimer forming a stable octameric structure. CD3D-CD3E and CD3G-CD3E heterodimers preferentially associate with TR alpha and TR beta chains, respectively. The association of the CD247 homodimer is the last step of TcR assembly in the endoplasmic reticulum and is required for transport to the cell surface.

It is found in the cell membrane. In terms of biological role, v region of the variable domain of T cell receptor (TR) beta chain that participates in the antigen recognition. Alpha-beta T cell receptors are antigen specific receptors which are essential to the immune response and are present on the cell surface of T lymphocytes. Recognize peptide-major histocompatibility (MH) (pMH) complexes that are displayed by antigen presenting cells (APC), a prerequisite for efficient T cell adaptive immunity against pathogens. Binding of alpha-beta TR to pMH complex initiates TR-CD3 clustering on the cell surface and intracellular activation of LCK that phosphorylates the ITAM motifs of CD3G, CD3D, CD3E and CD247 enabling the recruitment of ZAP70. In turn ZAP70 phosphorylates LAT, which recruits numerous signaling molecules to form the LAT signalosome. The LAT signalosome propagates signal branching to three major signaling pathways, the calcium, the mitogen-activated protein kinase (MAPK) kinase and the nuclear factor NF-kappa-B (NF-kB) pathways, leading to the mobilization of transcription factors that are critical for gene expression and essential for T cell growth and differentiation. The T cell repertoire is generated in the thymus, by V-(D)-J rearrangement. This repertoire is then shaped by intrathymic selection events to generate a peripheral T cell pool of self-MH restricted, non-autoaggressive T cells. Post-thymic interaction of alpha-beta TR with the pMH complexes shapes TR structural and functional avidity. The chain is T cell receptor beta variable 5-1 from Homo sapiens (Human).